A 330-amino-acid polypeptide reads, in one-letter code: Aspartate--ammonia ligase (330 aa).

It belongs to the class-II aminoacyl-tRNA synthetase family. AsnA subfamily.

It is found in the cytoplasm. It carries out the reaction L-aspartate + NH4(+) + ATP = L-asparagine + AMP + diphosphate + H(+). Its pathway is amino-acid biosynthesis; L-asparagine biosynthesis; L-asparagine from L-aspartate (ammonia route): step 1/1. The chain is Aspartate--ammonia ligase from Streptococcus pyogenes serotype M2 (strain MGAS10270).